We begin with the raw amino-acid sequence, 284 residues long: Pseudouridine-5'-phosphate glycosidase (284 aa).

Glu-17 serves as the catalytic Proton donor. Residues Lys-77 and Val-97 each coordinate substrate. Asp-126 provides a ligand contact to Mn(2+). Substrate is bound at residue 128 to 130; it reads SQD. Lys-147 functions as the Nucleophile in the catalytic mechanism.

It belongs to the pseudouridine-5'-phosphate glycosidase family. As to quaternary structure, homotrimer. Mn(2+) is required as a cofactor.

The catalysed reaction is D-ribose 5-phosphate + uracil = psi-UMP + H2O. Catalyzes the reversible cleavage of pseudouridine 5'-phosphate (PsiMP) to ribose 5-phosphate and uracil. Functions biologically in the cleavage direction, as part of a pseudouridine degradation pathway. This is Pseudouridine-5'-phosphate glycosidase from Thermotoga neapolitana (strain ATCC 49049 / DSM 4359 / NBRC 107923 / NS-E).